The primary structure comprises 463 residues: Nuclear hormone receptor family member nhr-79 (463 aa).

Positions 3-81 (RGKCMVCDSP…AGMMRDLVQA (79 aa)) form a DNA-binding region, nuclear receptor. 2 NR C4-type zinc fingers span residues 6 to 27 (CMVCDSPNATNYHFGAQSCKAC) and 43 to 64 (CLGDGVHSCKIDHTLRLNCRHC). The segment at 83-119 (REIKSDKGKNSRNSSQSEDFFSPPPEQPGPSNYFDQF) is disordered. Residues 203–463 (YTEQVINLNM…ILKDMLKFQY (261 aa)) enclose the NR LBD domain.

It belongs to the nuclear hormone receptor family.

Its subcellular location is the nucleus. Orphan nuclear receptor. The polypeptide is Nuclear hormone receptor family member nhr-79 (nhr-79) (Caenorhabditis elegans).